An 86-amino-acid chain; its full sequence is YcgL domain-containing protein XC_4086 (86 aa).

In terms of domain architecture, YcgL spans 1 to 83 (MHAYVYKSQR…PKTVVLAGEC (83 aa)).

This chain is YcgL domain-containing protein XC_4086, found in Xanthomonas campestris pv. campestris (strain 8004).